Consider the following 310-residue polypeptide: uncharacterized protein (310 aa).

Positions 5–62 (FTEENLLAFTTAARFGSFSKAAEELGLTTSAISYTIKRMETGLDVVLFTRSTRSIELT) constitute an HTH lysR-type domain. Residues 22 to 42 (FSKAAEELGLTTSAISYTIKR) constitute a DNA-binding region (H-T-H motif).

The protein belongs to the LysR transcriptional regulatory family.

This is an uncharacterized protein from Escherichia coli (strain K12).